Here is an 841-residue protein sequence, read N- to C-terminus: mRNA export factor ICP27 homolog (841 aa).

Disordered regions lie at residues 12-82 (PFAG…QYDK) and 115-163 (RAQG…TSPD). Residues 32 to 49 (YSQQQSQHYYYGHNQSSY) are compositionally biased toward low complexity. Positions 66 to 79 (MPPPLSSPSSPPPQ) are enriched in pro residues. Low complexity predominate over residues 132-147 (SSLVSSNNSNNNTTLS). Zn(2+) is bound by residues Cys-298, His-411, Cys-413, and Cys-418. A CHC2-type zinc finger spans residues 298–418 (CLLDSPGGGG…PGHRCQNEIC (121 aa)). 2 disordered regions span residues 444 to 749 (HPNG…DDLH) and 774 to 811 (SVTPLAAPPSIRILDHEPGDAEEEEESDTDFYDETDQP). The span at 495–507 (VDSRGGGGDRRGD) shows a compositional bias: basic and acidic residues. Residues 514 to 526 (NHHRHHTRRARTR) are compositionally biased toward basic residues. A compositionally biased stretch (basic and acidic residues) spans 553–563 (RRGEAQRESNG). 2 stretches are compositionally biased toward low complexity: residues 568–579 (KSPSTVSSTTVH) and 591–603 (SRKSQQSQQQPET). The span at 614–623 (MPPPPSPCSP) shows a compositional bias: pro residues. The segment covering 641–657 (RPHDPPSGEPADAEKEL) has biased composition (basic and acidic residues). Over residues 688-699 (DSSSSSSDSSSS) the composition is skewed to low complexity. Positions 708 to 731 (EDCRELDLQSKRLEEALEERCERD) are enriched in basic and acidic residues. Acidic residues-rich tracts occupy residues 732 to 749 (FEADDEEFAEPIEEDDLH) and 793 to 809 (DAEEEEESDTDFYDETD).

Belongs to the HHV-1 ICP27 protein family.

It is found in the virion tegument. It localises to the virion. The protein resides in the host nucleus. Its subcellular location is the host cytoplasm. Functionally, immediate early (EI) protein that plays many roles during productive infection including regulation of viral gene expression and nuclear export of intronless viral RNAs. This Mus musculus (Mouse) protein is mRNA export factor ICP27 homolog.